Reading from the N-terminus, the 254-residue chain is Uridylate kinase (254 aa).

9–12 contacts ATP; it reads KLSG. Position 51 (Gly51) interacts with UMP. The ATP site is built by Gly52 and Arg56. UMP contacts are provided by residues Asp72 and 133–140; that span reads SGNPFFTT. The ATP site is built by Thr160, Tyr166, and Asp169.

The protein belongs to the UMP kinase family. Homohexamer.

The protein localises to the cytoplasm. It catalyses the reaction UMP + ATP = UDP + ADP. The protein operates within pyrimidine metabolism; CTP biosynthesis via de novo pathway; UDP from UMP (UMPK route): step 1/1. Inhibited by UTP. Catalyzes the reversible phosphorylation of UMP to UDP. This is Uridylate kinase from Synechococcus sp. (strain JA-3-3Ab) (Cyanobacteria bacterium Yellowstone A-Prime).